An 85-amino-acid chain; its full sequence is Alpha-defensin 11 (85 aa).

Positions 1-11 (ALVLLAFQVQA) are cleaved as a signal peptide. The propeptide occupies 12-50 (DPIQNTDEETKTEEQPGEEDQAVSVSFGDPEGTSLQEES). Residues 14–46 (IQNTDEETKTEEQPGEEDQAVSVSFGDPEGTSL) form a disordered region. 3 disulfides stabilise this stretch: Cys56–Cys84, Cys58–Cys73, and Cys63–Cys83.

It belongs to the alpha-defensin family. In terms of tissue distribution, paneth cells of the small bowel.

The protein resides in the secreted. Probably contributes to the antimicrobial barrier function of the small bowel mucosa. The chain is Alpha-defensin 11 (Defa11) from Mus musculus (Mouse).